The following is a 561-amino-acid chain: Proline--tRNA ligase (561 aa).

This sequence belongs to the class-II aminoacyl-tRNA synthetase family. ProS type 1 subfamily. As to quaternary structure, homodimer.

It localises to the cytoplasm. The enzyme catalyses tRNA(Pro) + L-proline + ATP = L-prolyl-tRNA(Pro) + AMP + diphosphate. Its function is as follows. Catalyzes the attachment of proline to tRNA(Pro) in a two-step reaction: proline is first activated by ATP to form Pro-AMP and then transferred to the acceptor end of tRNA(Pro). As ProRS can inadvertently accommodate and process non-cognate amino acids such as alanine and cysteine, to avoid such errors it has two additional distinct editing activities against alanine. One activity is designated as 'pretransfer' editing and involves the tRNA(Pro)-independent hydrolysis of activated Ala-AMP. The other activity is designated 'posttransfer' editing and involves deacylation of mischarged Ala-tRNA(Pro). The misacylated Cys-tRNA(Pro) is not edited by ProRS. This Thermosipho africanus (strain TCF52B) protein is Proline--tRNA ligase.